We begin with the raw amino-acid sequence, 216 residues long: MRGLRIAVPKGAIFEDALRALEAAGLPAGALRGNGRRLFHRAGGVEFIVSRPSDVPVFVEHGAADVGIVGKDVLEEQEPNVMELVDLGSGACRMVLAAPRERASQVERAIAHAEVVRVATKFPRTARRYFEEMGRQAEVIELHGSVELAPLVGLSECIVDLTATGTTLRENDLEVLDEISRSTARLIANRGSYRLRHAEIRGLLASVGREGRPVGG.

It belongs to the ATP phosphoribosyltransferase family. Short subfamily. As to quaternary structure, heteromultimer composed of HisG and HisZ subunits.

Its subcellular location is the cytoplasm. It carries out the reaction 1-(5-phospho-beta-D-ribosyl)-ATP + diphosphate = 5-phospho-alpha-D-ribose 1-diphosphate + ATP. It participates in amino-acid biosynthesis; L-histidine biosynthesis; L-histidine from 5-phospho-alpha-D-ribose 1-diphosphate: step 1/9. Functionally, catalyzes the condensation of ATP and 5-phosphoribose 1-diphosphate to form N'-(5'-phosphoribosyl)-ATP (PR-ATP). Has a crucial role in the pathway because the rate of histidine biosynthesis seems to be controlled primarily by regulation of HisG enzymatic activity. This is ATP phosphoribosyltransferase from Rubrobacter xylanophilus (strain DSM 9941 / JCM 11954 / NBRC 16129 / PRD-1).